The primary structure comprises 370 residues: MQIYKVGGAVRDRLLGRPVSDIDWLVVGASVEEMHAKGFRPVGADFPVFLHPKTGEEYALARTERKSGRGYGGFTFHASPEVTLEEDLIRRDLTINAMAEDDQGNVLDPFHGRADLEQRLLRHVSPAFAEDPLRVLRVARFAARYAPLGFRVADETLELMKQIAASGELQALTAERSWKEIERALMEDEPQVFINVLSDCAALKQLMPELEGDAAALAALTQAAEHHQPLHIRWACLLHNLKPASIKALNQRFKAPRECQELAMLVGECASNGHRALQLEPEDMLALLQKFDVYRRPQRFEDFISVCQMVARGSGQAYPQADYLRAAAAAARAVEAKPLVEAGLTGQALGEALRHQRLEALKAYKANAEN.

ATP is bound by residues Gly-8 and Arg-11. Residues Gly-8 and Arg-11 each contribute to the CTP site. Residues Asp-21 and Asp-23 each contribute to the Mg(2+) site. 3 residues coordinate ATP: Arg-91, Arg-137, and Arg-140. Residues Arg-91, Arg-137, and Arg-140 each coordinate CTP.

Belongs to the tRNA nucleotidyltransferase/poly(A) polymerase family. Bacterial CCA-adding enzyme type 2 subfamily. The cofactor is Mg(2+).

It carries out the reaction a tRNA precursor + 2 CTP + ATP = a tRNA with a 3' CCA end + 3 diphosphate. The enzyme catalyses a tRNA with a 3' CCA end + 2 CTP + ATP = a tRNA with a 3' CCACCA end + 3 diphosphate. Catalyzes the addition and repair of the essential 3'-terminal CCA sequence in tRNAs without using a nucleic acid template. Adds these three nucleotides in the order of C, C, and A to the tRNA nucleotide-73, using CTP and ATP as substrates and producing inorganic pyrophosphate. tRNA 3'-terminal CCA addition is required both for tRNA processing and repair. Also involved in tRNA surveillance by mediating tandem CCA addition to generate a CCACCA at the 3' terminus of unstable tRNAs. While stable tRNAs receive only 3'-terminal CCA, unstable tRNAs are marked with CCACCA and rapidly degraded. This is CCA-adding enzyme from Pseudomonas putida (strain W619).